Reading from the N-terminus, the 614-residue chain is Zinc metalloproteinase-disintegrin-like HR1b (614 aa).

An N-terminal signal peptide occupies residues 1-20; that stretch reads MIQVLLVTICLAVFPYQGSS. Positions 21 to 191 are excised as a propeptide; that stretch reads IILESGNVND…KASKLVVTAE (171 aa). Glutamine 192 bears the Pyrrolidone carboxylic acid mark. The Peptidase M12B domain maps to 198–394; that stretch reads RYIKLAIVVD…HKPQCILNAP (197 aa). N-linked (GlcNAc...) asparagine glycosylation occurs at asparagine 264. Disulfide bonds link cysteine 309-cysteine 389, cysteine 349-cysteine 373, and cysteine 351-cysteine 356. Histidine 334 provides a ligand contact to Zn(2+). The active site involves glutamate 335. Residues histidine 338 and histidine 344 each coordinate Zn(2+). A glycan (N-linked (GlcNAc...) asparagine) is linked at asparagine 372. A propeptide spanning residues 395–398 is cleaved from the precursor; that stretch reads SKTD. The Disintegrin domain maps to 402–488; that stretch reads PPVCGNELLE…DCPTDRFHRN (87 aa). Ca(2+) contacts are provided by valine 404, asparagine 407, leucine 409, glutamate 411, glutamate 414, and aspartate 417. 22 disulfide bridges follow: cysteine 405/cysteine 424, cysteine 405/cysteine 434, cysteine 416/cysteine 429, cysteine 416/cysteine 434, cysteine 418/cysteine 424, cysteine 428/cysteine 451, cysteine 442/cysteine 448, cysteine 447/cysteine 473, cysteine 460/cysteine 480, cysteine 467/cysteine 492, cysteine 467/cysteine 499, cysteine 492/cysteine 504, cysteine 499/cysteine 504, cysteine 511/cysteine 526, cysteine 511/cysteine 561, cysteine 526/cysteine 568, cysteine 539/cysteine 549, cysteine 549/cysteine 556, cysteine 556/cysteine 593, cysteine 561/cysteine 568, cysteine 587/cysteine 598, and cysteine 593/cysteine 598. The D/ECD-tripeptide motif lies at 466–468; the sequence is ECD. A glycan (N-linked (GlcNAc...) asparagine) is linked at asparagine 518. Asparagine 571 carries an N-linked (GlcNAc...) asparagine glycan. Residues 608 to 614 constitute a propeptide that is removed on maturation; that stretch reads TTVFSLI.

Belongs to the venom metalloproteinase (M12B) family. P-III subfamily. P-IIIb sub-subfamily. In terms of assembly, monomer. Zn(2+) serves as cofactor. As to expression, expressed by the venom gland.

Its subcellular location is the secreted. In terms of biological role, zinc protease that induces hemorrhage. Has preference for Tyr, Leu, Arg, Met, and Phe at the P1 position, in descending order (in vitro). Shows equal preference for the sequences of Ala-Asp and Arg-Ile at the P3-P2 position with different enzyme cleavage sites across the P1 position: the N-terminus side for Ala-Asp and the C-terminus side for Arg-Ile. Functionally, inhibits platelet aggregation induced by ADP, thrombin, platelet-activating factor and collagen. Acts by inhibiting fibrinogen interaction with platelet receptors alpha-IIb/beta-3 (ITGA2B/ITGB3). The chain is Zinc metalloproteinase-disintegrin-like HR1b from Protobothrops flavoviridis (Habu).